The primary structure comprises 127 residues: MAIVGLGTDIVEIERIQAHVARAGDKLAKRVLTEAELAIYTGHSQPSRYLAKRFAAKEAAAKALGTGIGRGVSFQHIHIGNNEDGAPTIHFTEGALARLQQLKATVGHISIADEKSYAIATVIIESQ.

Residues aspartate 9 and glutamate 58 each contribute to the Mg(2+) site.

Belongs to the P-Pant transferase superfamily. AcpS family. Requires Mg(2+) as cofactor.

It localises to the cytoplasm. It carries out the reaction apo-[ACP] + CoA = holo-[ACP] + adenosine 3',5'-bisphosphate + H(+). In terms of biological role, transfers the 4'-phosphopantetheine moiety from coenzyme A to a Ser of acyl-carrier-protein. The chain is Holo-[acyl-carrier-protein] synthase from Shewanella baltica (strain OS223).